We begin with the raw amino-acid sequence, 62 residues long: Calmodulin regulator protein PCP4 (62 aa).

Residues Met1–Glu40 form a disordered region. A compositionally biased stretch (basic and acidic residues) spans Gly12–Glu28. Residues Glu28–Glu40 form an acidic; binds calcium and is required for modulating the calcium-binding kinetics of calmodulin region. Residues Thr39 to Ser62 form the IQ domain.

It belongs to the PCP4 family. As to quaternary structure, binds to both calcium-free and calcium-bound calmodulin. The affinity for the calcium-bound form is 50-fold greater.

Functionally, functions as a modulator of calcium-binding by calmodulin. Thereby, regulates calmodulin activity and the different processes it controls. For instance, may play a role in neuronal differentiation through activation of calmodulin-dependent kinase signaling pathways. This is Calmodulin regulator protein PCP4 from Bos taurus (Bovine).